A 447-amino-acid polypeptide reads, in one-letter code: Na(+)/H(+) antiporter NhaA 2 (447 aa).

11 helical membrane passes run 30–50, 81–101, 117–137, 146–166, 175–195, 199–219, 220–240, 315–335, 350–370, 383–403, and 415–435; these read FIHI…LAVL, LHKW…ALEL, LLSI…YLLL, GWGT…ALLG, IFML…VAIG, AVDW…RAMA, FLGV…WLVI, LLHP…NAGV, VFVG…WIAV, WGMV…ALFI, and AAKL…FLCL.

Belongs to the NhaA Na(+)/H(+) (TC 2.A.33) antiporter family.

It localises to the cell inner membrane. The catalysed reaction is Na(+)(in) + 2 H(+)(out) = Na(+)(out) + 2 H(+)(in). Functionally, na(+)/H(+) antiporter that extrudes sodium in exchange for external protons. The polypeptide is Na(+)/H(+) antiporter NhaA 2 (Vibrio vulnificus (strain CMCP6)).